Consider the following 435-residue polypeptide: NADH-quinone oxidoreductase subunit D (435 aa).

The protein belongs to the complex I 49 kDa subunit family. In terms of assembly, NDH-1 is composed of 14 different subunits. Subunits NuoB, C, D, E, F, and G constitute the peripheral sector of the complex.

The protein resides in the cell membrane. The catalysed reaction is a quinone + NADH + 5 H(+)(in) = a quinol + NAD(+) + 4 H(+)(out). In terms of biological role, NDH-1 shuttles electrons from NADH, via FMN and iron-sulfur (Fe-S) centers, to quinones in the respiratory chain. The immediate electron acceptor for the enzyme in this species is believed to be ubiquinone. Couples the redox reaction to proton translocation (for every two electrons transferred, four hydrogen ions are translocated across the cytoplasmic membrane), and thus conserves the redox energy in a proton gradient. The chain is NADH-quinone oxidoreductase subunit D from Stenotrophomonas maltophilia (strain K279a).